Reading from the N-terminus, the 667-residue chain is Trifunctional UDP-glucose 4,6-dehydratase/UDP-4-keto-6-deoxy-D-glucose 3,5-epimerase/UDP-4-keto-L-rhamnose-reductase RHM2 (667 aa).

15-21 is a binding site for NAD(+); it reads GAAGFIA. A substrate-binding site is contributed by T134. The Proton donor role is filled by D135. Catalysis depends on proton acceptor residues E136 and Y161. 389-395 serves as a coordination point for NADP(+); it reads GKTGWLG.

The protein in the N-terminal section; belongs to the NAD(P)-dependent epimerase/dehydratase family. dTDP-glucose dehydratase subfamily. This sequence in the C-terminal section; belongs to the dTDP-4-dehydrorhamnose reductase family. The cofactor is NAD(+). NADP(+) is required as a cofactor. In terms of tissue distribution, expressed in roots, stems, leaves, seedlings, inflorescence tips, and siliques.

The catalysed reaction is UDP-alpha-D-glucose = UDP-4-dehydro-6-deoxy-alpha-D-glucose + H2O. The protein operates within carbohydrate biosynthesis. In terms of biological role, trifunctional enzyme involved in UDP-beta-L-rhamnose biosynthesis, a precursor of the primary cell wall components rhamnogalacturonan I (RG-I) and rhamnogalacturonan II (RG-II). Catalyzes the dehydration of UDP-glucose to form UDP-4-dehydro-6-deoxy-D-glucose followed by the epimerization of the C3' and C5' positions of UDP-4-dehydro-6-deoxy-D-glucose to form UDP-4-keto-beta-L-rhamnose and the reduction of UDP-4-keto-beta-L-rhamnose to yield UDP-beta-L-rhamnose. Required for the normal seed coat epidermal development. This chain is Trifunctional UDP-glucose 4,6-dehydratase/UDP-4-keto-6-deoxy-D-glucose 3,5-epimerase/UDP-4-keto-L-rhamnose-reductase RHM2, found in Arabidopsis thaliana (Mouse-ear cress).